A 258-amino-acid chain; its full sequence is UPF0246 protein plu0566 (258 aa).

The protein belongs to the UPF0246 family.

The protein is UPF0246 protein plu0566 of Photorhabdus laumondii subsp. laumondii (strain DSM 15139 / CIP 105565 / TT01) (Photorhabdus luminescens subsp. laumondii).